Consider the following 189-residue polypeptide: Elongation factor P (189 aa).

It belongs to the elongation factor P family.

It is found in the cytoplasm. Its pathway is protein biosynthesis; polypeptide chain elongation. Its function is as follows. Involved in peptide bond synthesis. Stimulates efficient translation and peptide-bond synthesis on native or reconstituted 70S ribosomes in vitro. Probably functions indirectly by altering the affinity of the ribosome for aminoacyl-tRNA, thus increasing their reactivity as acceptors for peptidyl transferase. In Chloroflexus aggregans (strain MD-66 / DSM 9485), this protein is Elongation factor P.